The chain runs to 176 residues: ATP-dependent protease subunit HslV (176 aa).

Thr6 is an active-site residue. 3 residues coordinate Na(+): Ser161, Cys164, and Thr167.

It belongs to the peptidase T1B family. HslV subfamily. A double ring-shaped homohexamer of HslV is capped on each side by a ring-shaped HslU homohexamer. The assembly of the HslU/HslV complex is dependent on binding of ATP.

The protein resides in the cytoplasm. It carries out the reaction ATP-dependent cleavage of peptide bonds with broad specificity.. With respect to regulation, allosterically activated by HslU binding. Its function is as follows. Protease subunit of a proteasome-like degradation complex believed to be a general protein degrading machinery. The polypeptide is ATP-dependent protease subunit HslV (Thermosipho melanesiensis (strain DSM 12029 / CIP 104789 / BI429)).